A 360-amino-acid chain; its full sequence is Protein phosphatase 1L (360 aa).

The Extracellular segment spans residues 1–25 (MIEDTMTLLSLLGRIMRYFLLRPET). The helical transmembrane segment at 26 to 42 (LFLLCISLALWSYFFHT) threads the bilayer. Over 43–360 (DEVKTIVKSS…FRNSSKTEEH (318 aa)) the chain is Cytoplasmic. A PPM-type phosphatase domain is found at 92–351 (NVAVYSIQGR…DNITVMVVKF (260 aa)). 4 residues coordinate Mn(2+): D128, G129, D302, and D342.

The protein belongs to the PP2C family. In terms of assembly, interacts with MAP3K7/TAK1 and MAP3K5. The cofactor is Mg(2+). Mn(2+) is required as a cofactor. As to expression, expressed in brain, heart, testis, liver, lung and skeletal muscle.

It is found in the membrane. It carries out the reaction O-phospho-L-seryl-[protein] + H2O = L-seryl-[protein] + phosphate. The enzyme catalyses O-phospho-L-threonyl-[protein] + H2O = L-threonyl-[protein] + phosphate. In terms of biological role, acts as a suppressor of the SAPK signaling pathways by associating with and dephosphorylating MAP3K7/TAK1 and MAP3K5, and by attenuating the association between MAP3K7/TAK1 and MAP2K4 or MAP2K6. This Mus musculus (Mouse) protein is Protein phosphatase 1L (Ppm1l).